A 346-amino-acid chain; its full sequence is Ornithine carbamoyltransferase, catabolic (346 aa).

Carbamoyl phosphate contacts are provided by residues 58–61, Asn-85, Arg-109, and 136–139; these read STRT and HPTQ. L-ornithine contacts are provided by residues Asn-168, Asp-239, and 243-244; that span reads SL. Residues 280-281 and Arg-332 each bind carbamoyl phosphate; that span reads CL.

Belongs to the aspartate/ornithine carbamoyltransferase superfamily. OTCase family.

The protein resides in the cytoplasm. It carries out the reaction carbamoyl phosphate + L-ornithine = L-citrulline + phosphate + H(+). Its pathway is amino-acid degradation; L-arginine degradation via ADI pathway; carbamoyl phosphate from L-arginine: step 2/2. Reversibly catalyzes the transfer of the carbamoyl group from carbamoyl phosphate (CP) to the N(epsilon) atom of ornithine (ORN) to produce L-citrulline. The sequence is that of Ornithine carbamoyltransferase, catabolic from Mycoplasma pneumoniae (strain ATCC 29342 / M129 / Subtype 1) (Mycoplasmoides pneumoniae).